Reading from the N-terminus, the 77-residue chain is Acyl carrier protein (77 aa).

The Carrier domain maps to 2–77 (SDIADRVKKI…DAVKFISEAA (76 aa)). Residue Ser-37 is modified to O-(pantetheine 4'-phosphoryl)serine.

It belongs to the acyl carrier protein (ACP) family. 4'-phosphopantetheine is transferred from CoA to a specific serine of apo-ACP by AcpS. This modification is essential for activity because fatty acids are bound in thioester linkage to the sulfhydryl of the prosthetic group.

Its subcellular location is the cytoplasm. It participates in lipid metabolism; fatty acid biosynthesis. Carrier of the growing fatty acid chain in fatty acid biosynthesis. This chain is Acyl carrier protein, found in Cereibacter sphaeroides (strain ATCC 17029 / ATH 2.4.9) (Rhodobacter sphaeroides).